An 825-amino-acid polypeptide reads, in one-letter code: Probable inorganic carbon transporter subunit DabA (825 aa).

Positions 346, 348, 516, and 531 each coordinate Zn(2+).

Belongs to the inorganic carbon transporter (TC 9.A.2) DabA family. Forms a complex with DabB. The cofactor is Zn(2+).

It is found in the cell inner membrane. Its function is as follows. Part of an energy-coupled inorganic carbon pump. In Paracidovorax citrulli (strain AAC00-1) (Acidovorax citrulli), this protein is Probable inorganic carbon transporter subunit DabA.